We begin with the raw amino-acid sequence, 463 residues long: Interstitial collagenase B (463 aa).

The signal sequence occupies residues 1–17 (MPSLPLLLRLWAASSYS). The propeptide at 18–96 (FPVIQDGLQK…PRCGVPDVAP (79 aa)) is activation peptide. A Cysteine switch motif is present at residues 87–94 (PRCGVPDV). Residue Cys89 coordinates Zn(2+). The metalloprotease stretch occupies residues 95–273 (APYAITHNNP…PIQLTDATLD (179 aa)). Position 155 (Asp155) interacts with Ca(2+). 2 residues coordinate Zn(2+): His165 and Asp167. The Ca(2+) site is built by Asp172 and Gly173. A Zn(2+)-binding site is contributed by His180. Ca(2+) is bound by residues Gly187 and Gly189. Residue His193 coordinates Zn(2+). Asp195 is a Ca(2+) binding site. Position 215 (His215) interacts with Zn(2+). Residue Glu216 is part of the active site. Residues His219 and His225 each coordinate Zn(2+). Cysteines 275 and 463 form a disulfide. Hemopexin repeat units follow at residues 278–321 (GLTF…WPNL) and 322–368 (PGKF…FGFP). Asp282 contacts Ca(2+). Asn370 is a glycosylation site (N-linked (GlcNAc...) asparagine). Hemopexin repeat units follow at residues 371 to 419 (VTNI…FPGI) and 420 to 463 (DYKV…WFNC). The Ca(2+) site is built by Asp375 and Asp424.

Belongs to the peptidase M10A family. Ca(2+) serves as cofactor. Requires Zn(2+) as cofactor.

The protein localises to the secreted. The protein resides in the extracellular space. It is found in the extracellular matrix. The catalysed reaction is Cleavage of the triple helix of collagen at about three-quarters of the length of the molecule from the N-terminus, at 775-Gly-|-Ile-776 in the alpha1(I) chain. Cleaves synthetic substrates and alpha-macroglobulins at bonds where P1' is a hydrophobic residue.. With respect to regulation, can be activated without removal of the activation peptide. In Mus musculus (Mouse), this protein is Interstitial collagenase B (Mmp1b).